A 548-amino-acid polypeptide reads, in one-letter code: Folylpolyglutamate synthase (548 aa).

130–133 is an ATP binding site; it reads GKGS. Mg(2+) contacts are provided by Ser-157, Glu-234, and His-262. ATP-binding residues include Arg-382 and Asp-396.

Belongs to the folylpolyglutamate synthase family. A monovalent cation is required as a cofactor.

Its subcellular location is the mitochondrion inner membrane. It localises to the mitochondrion matrix. It is found in the cytoplasm. The catalysed reaction is (6S)-5,6,7,8-tetrahydrofolyl-(gamma-L-Glu)(n) + L-glutamate + ATP = (6S)-5,6,7,8-tetrahydrofolyl-(gamma-L-Glu)(n+1) + ADP + phosphate + H(+). The protein operates within cofactor biosynthesis; tetrahydrofolylpolyglutamate biosynthesis. Catalyzes conversion of folates to polyglutamate derivatives allowing concentration of folate compounds in the cell and the intracellular retention of these cofactors, which are important substrates for most of the folate-dependent enzymes that are involved in one-carbon transfer reactions involved in purine, pyrimidine and amino acid synthesis. Required for methionine synthesis and maintenance of intact mitochondrial DNA. Involved in telomere maintenance. The polypeptide is Folylpolyglutamate synthase (Saccharomyces cerevisiae (strain FostersB) (Baker's yeast)).